Reading from the N-terminus, the 337-residue chain is Fructose-1,6-bisphosphatase class 1 (337 aa).

Residues Glu94, Asp116, Leu118, and Asp119 each contribute to the Mg(2+) site. Substrate is bound by residues 119–122, Asn210, and Lys276; that span reads DGSS. Mg(2+) is bound at residue Glu282.

Belongs to the FBPase class 1 family. Homotetramer. It depends on Mg(2+) as a cofactor.

It is found in the cytoplasm. The catalysed reaction is beta-D-fructose 1,6-bisphosphate + H2O = beta-D-fructose 6-phosphate + phosphate. The protein operates within carbohydrate biosynthesis; gluconeogenesis. This Burkholderia vietnamiensis (strain G4 / LMG 22486) (Burkholderia cepacia (strain R1808)) protein is Fructose-1,6-bisphosphatase class 1.